The primary structure comprises 302 residues: N-acetylmuramic acid 6-phosphate etherase (302 aa).

The SIS domain maps to 57-220 (VSEKLKNNGR…TTAVMIKLGK (164 aa)). Glutamate 85 functions as the Proton donor in the catalytic mechanism. The active site involves glutamate 116.

This sequence belongs to the GCKR-like family. MurNAc-6-P etherase subfamily. In terms of assembly, homodimer.

The catalysed reaction is N-acetyl-D-muramate 6-phosphate + H2O = N-acetyl-D-glucosamine 6-phosphate + (R)-lactate. Its pathway is amino-sugar metabolism; N-acetylmuramate degradation. Specifically catalyzes the cleavage of the D-lactyl ether substituent of MurNAc 6-phosphate, producing GlcNAc 6-phosphate and D-lactate. The sequence is that of N-acetylmuramic acid 6-phosphate etherase from Clostridium acetobutylicum (strain ATCC 824 / DSM 792 / JCM 1419 / IAM 19013 / LMG 5710 / NBRC 13948 / NRRL B-527 / VKM B-1787 / 2291 / W).